A 100-amino-acid polypeptide reads, in one-letter code: Small ribosomal subunit protein uS14c (100 aa).

This sequence belongs to the universal ribosomal protein uS14 family. In terms of assembly, part of the 30S ribosomal subunit.

It is found in the plastid. The protein localises to the chloroplast. Binds 16S rRNA, required for the assembly of 30S particles. This Nephroselmis olivacea (Green alga) protein is Small ribosomal subunit protein uS14c.